We begin with the raw amino-acid sequence, 357 residues long: UDP-N-acetylglucosamine--N-acetylmuramyl-(pentapeptide) pyrophosphoryl-undecaprenol N-acetylglucosamine transferase (357 aa).

UDP-N-acetyl-alpha-D-glucosamine is bound by residues 10–12 (TGG), Asn-124, Ser-189, Ile-244, and Gln-289.

Belongs to the glycosyltransferase 28 family. MurG subfamily.

The protein resides in the cell membrane. It catalyses the reaction Mur2Ac(oyl-L-Ala-gamma-D-Glu-L-Lys-D-Ala-D-Ala)-di-trans,octa-cis-undecaprenyl diphosphate + UDP-N-acetyl-alpha-D-glucosamine = beta-D-GlcNAc-(1-&gt;4)-Mur2Ac(oyl-L-Ala-gamma-D-Glu-L-Lys-D-Ala-D-Ala)-di-trans,octa-cis-undecaprenyl diphosphate + UDP + H(+). It functions in the pathway cell wall biogenesis; peptidoglycan biosynthesis. In terms of biological role, cell wall formation. Catalyzes the transfer of a GlcNAc subunit on undecaprenyl-pyrophosphoryl-MurNAc-pentapeptide (lipid intermediate I) to form undecaprenyl-pyrophosphoryl-MurNAc-(pentapeptide)GlcNAc (lipid intermediate II). The chain is UDP-N-acetylglucosamine--N-acetylmuramyl-(pentapeptide) pyrophosphoryl-undecaprenol N-acetylglucosamine transferase from Lactococcus lactis subsp. cremoris (strain MG1363).